We begin with the raw amino-acid sequence, 513 residues long: Cytochrome P450 monooxygenase asaD (513 aa).

The helical transmembrane segment at 14-34 threads the bilayer; that stretch reads ILYPFLFGIFAVASLCIATLL. Residues N258, N370, N431, and N441 are each glycosylated (N-linked (GlcNAc...) asparagine). A heme-binding site is contributed by C461.

Belongs to the cytochrome P450 family. Heme serves as cofactor.

The protein localises to the membrane. The protein operates within secondary metabolite biosynthesis. Its function is as follows. Cytochrome P450 monooxygenase; part of the gene cluster that mediates the biosynthesis of aspergillic acid, a hydroxamic acid-containing pyrazinone with aliphatic side chains that originates from leucine (Leu) and isoleucine (Ile). Aspergillic acid has antibiotic properties and was shown to be lethal to mice. The first step in the pathway is the production of deoxyaspergillic acid via a condensation between the Ile amine and the Leu carboxylic acid, followed by a reductive release from the protein forming the dipeptide aldehyde NH(2)-Leu-Ile-CHO, which could undergo an intermolecular cyclization resulting in a dihydropyrazinone. As the NRPS asaC lacks a condensation domain, it is improbable that it is responsible for condensation of Leu and Ile. One possibility is that asaC acts on a previously condensed dipeptide and functions as a Leu-Ile reductase to yield deoxyaspergillic acid. After asaC forms deoxyaspergillic acid, the cytochrome P450 asaD oxidizes the pyrazinone to the hydroxamic acid-containing bioactive metabolite aspergillic acid. The hydroxylase/desaturase asaB can then convert aspergillic acid to hydroxyaspergillic acid. Both aspergillic acid and hydroxyaspergillic acid can form complexes with iron producing ferriaspergillin analogs. In Aspergillus flavus (strain ATCC 200026 / FGSC A1120 / IAM 13836 / NRRL 3357 / JCM 12722 / SRRC 167), this protein is Cytochrome P450 monooxygenase asaD.